Consider the following 341-residue polypeptide: Phosphoribosylformylglycinamidine cyclo-ligase (341 aa).

It belongs to the AIR synthase family.

The protein localises to the cytoplasm. It carries out the reaction 2-formamido-N(1)-(5-O-phospho-beta-D-ribosyl)acetamidine + ATP = 5-amino-1-(5-phospho-beta-D-ribosyl)imidazole + ADP + phosphate + H(+). It functions in the pathway purine metabolism; IMP biosynthesis via de novo pathway; 5-amino-1-(5-phospho-D-ribosyl)imidazole from N(2)-formyl-N(1)-(5-phospho-D-ribosyl)glycinamide: step 2/2. In Picosynechococcus sp. (strain ATCC 27264 / PCC 7002 / PR-6) (Agmenellum quadruplicatum), this protein is Phosphoribosylformylglycinamidine cyclo-ligase.